Consider the following 524-residue polypeptide: Secologanin synthase 1 (524 aa).

Residues 1–11 (MEMDMDTIRKA) are Lumenal-facing. The helical transmembrane segment at 12–32 (IAATIFALVMAWAWRVLDWAW) threads the bilayer. Residues 33-524 (FTPKRIEKRL…SHVIYKKLES (492 aa)) lie on the Cytoplasmic side of the membrane. C470 contacts heme.

This sequence belongs to the cytochrome P450 family. Requires heme as cofactor. As to expression, upper and lower leaf epidermis.

The protein resides in the endoplasmic reticulum membrane. It catalyses the reaction loganin + reduced [NADPH--hemoprotein reductase] + O2 = secologanin + oxidized [NADPH--hemoprotein reductase] + 2 H2O + H(+). The catalysed reaction is secologanin + reduced [NADPH--hemoprotein reductase] + O2 = secoxyloganin + oxidized [NADPH--hemoprotein reductase] + H2O + 2 H(+). It functions in the pathway alkaloid biosynthesis; secologanin biosynthesis. In terms of biological role, component of the seco-iridoid and derivatives monoterpenoid indole alkaloids (MIAs, e.g. secologanin) biosynthesis pathway. Catalyzes the conversion of loganin into secologanin. Catalyzes the conversion of secologanin into secoxyloganin. This Catharanthus roseus (Madagascar periwinkle) protein is Secologanin synthase 1.